Here is a 538-residue protein sequence, read N- to C-terminus: Putative cysteine ligase BshC (538 aa).

Residues 460 to 484 (KINEQIELLERMLKRNVEKKHEVEL) adopt a coiled-coil conformation.

This sequence belongs to the BshC family.

Its function is as follows. Involved in bacillithiol (BSH) biosynthesis. May catalyze the last step of the pathway, the addition of cysteine to glucosamine malate (GlcN-Mal) to generate BSH. The polypeptide is Putative cysteine ligase BshC (Bacillus cereus (strain AH187)).